The sequence spans 2191 residues: Genome polyprotein (2191 aa).

A lipid anchor (N-myristoyl glycine; by host) is attached at G2. At 2-1501 the chain is on the cytoplasmic side; it reads GAQVSTQKTG…HVSRAFICLQ (1500 aa). The amphipathic alpha-helix stretch occupies residues 566 to 582; the sequence is FYQNDVQNAVERSIVRV. Active-site for protease 2A activity residues include H878 and D896. Residues C913 and C915 each contribute to the Zn(2+) site. The For protease 2A activity role is filled by C967. Zn(2+) is bound by residues C973 and H975. The interval 1107–1179 is membrane-binding; that stretch reads NNGWLKKFTE…EQSAPSQSDQ (73 aa). The interval 1107–1245 is oligomerization; sequence NNGWLKKFTE…SPGVGKSVAT (139 aa). Residues 1128-1132 are RNA-binding; that stretch reads AIKIQ. Residues 1211–1367 enclose the SF3 helicase domain; the sequence is EKKMSNYIQF…SMYNQNGKIN (157 aa). Zn(2+) contacts are provided by C1375, C1387, and C1392. Residues 1375–1392 form a C4-type; degenerate zinc finger; it reads CDEECCPVNFKKCCPLVC. The RNA-binding stretch occupies residues 1419 to 1426; that stretch reads EYNHRHSV. The oligomerization stretch occupies residues 1430–1435; it reads LEALFQ. An intramembrane segment occupies 1502 to 1517; the sequence is ALTTFVSVAGIIYIIY. The Cytoplasmic portion of the chain corresponds to 1518–2191; it reads KLFAGFQGAY…TLRRKWLDSF (674 aa). Y1527 is modified (O-(5'-phospho-RNA)-tyrosine). The Peptidase C3 domain maps to 1547–1725; that stretch reads GPAFEFAVAM…FSAALLKHYF (179 aa). Active-site for protease 3C activity residues include H1586, E1617, and C1693. Residues 1956 to 2072 enclose the RdRp catalytic domain; the sequence is GHLIAFDYSG…SYPWPIDASL (117 aa). Residues D1962 and D2058 each coordinate Mg(2+).

The protein belongs to the picornaviruses polyprotein family. As to quaternary structure, interacts with capsid protein VP1 and capsid protein VP3 to form heterotrimeric protomers. Interacts with capsid protein VP0, and capsid protein VP3 to form heterotrimeric protomers. Five protomers subsequently associate to form pentamers which serve as building blocks for the capsid. Interacts with capsid protein VP2, capsid protein VP3 and capsid protein VP4 following cleavage of capsid protein VP0. Interacts with host CD55 and FCGRT; these interactions promote virus attachment to the host cell and subsequent internalization. In terms of assembly, interacts with capsid protein VP1 and capsid protein VP3 in the mature capsid. Interacts with host CD55 and FCGRT; these interactions promote virus attachment to the host cell and subsequent internalization. As to quaternary structure, interacts with capsid protein VP0 and capsid protein VP1 to form heterotrimeric protomers. Five protomers subsequently associate to form pentamers which serve as building blocks for the capsid. Interacts with capsid protein VP4 in the mature capsid. Interacts with protein 2C; this interaction may be important for virion morphogenesis. Interacts with host FCGRT; this interaction promotes virus attachment to the host cell and subsequent internalization. Interacts with capsid protein VP1 and capsid protein VP3. In terms of assembly, homodimer. As to quaternary structure, homohexamer; forms a hexameric ring structure with 6-fold symmetry characteristic of AAA+ ATPases. Interacts (via N-terminus) with host RTN3 (via reticulon domain); this interaction is important for viral replication. Interacts with capsid protein VP3; this interaction may be important for virion morphogenesis. Interacts with protein 3CD. In terms of assembly, homodimer. Interacts with host GBF1. Interacts (via GOLD domain) with host ACBD3 (via GOLD domain); this interaction allows the formation of a viral protein 3A/ACBD3 heterotetramer with a 2:2 stoichiometry, which will stimulate the recruitment of host PI4KB in order to synthesize PI4P at the viral RNA replication sites. As to quaternary structure, interacts with RNA-directed RNA polymerase. Interacts with protein 3AB and with RNA-directed RNA polymerase. In terms of assembly, interacts with Viral protein genome-linked and with protein 3CD. Mg(2+) serves as cofactor. Specific enzymatic cleavages in vivo by the viral proteases yield processing intermediates and the mature proteins. Post-translationally, myristoylation is required for the formation of pentamers during virus assembly. Further assembly of 12 pentamers and a molecule of genomic RNA generates the provirion. In terms of processing, during virion maturation, immature virions are rendered infectious following cleavage of VP0 into VP4 and VP2. This maturation seems to be an autocatalytic event triggered by the presence of RNA in the capsid and it is followed by a conformational change infectious virion. Myristoylation is required during RNA encapsidation and formation of the mature virus particle. Post-translationally, VPg is uridylylated by the polymerase into VPg-pUpU. This acts as a nucleotide-peptide primer for the genomic RNA replication.

It is found in the virion. It localises to the host cytoplasm. The protein localises to the host cytoplasmic vesicle membrane. Its subcellular location is the host nucleus. It catalyses the reaction a ribonucleoside 5'-triphosphate + H2O = a ribonucleoside 5'-diphosphate + phosphate + H(+). The enzyme catalyses Selective cleavage of Tyr-|-Gly bond in the picornavirus polyprotein.. The catalysed reaction is RNA(n) + a ribonucleoside 5'-triphosphate = RNA(n+1) + diphosphate. It carries out the reaction Selective cleavage of Gln-|-Gly bond in the poliovirus polyprotein. In other picornavirus reactions Glu may be substituted for Gln, and Ser or Thr for Gly.. Replication or transcription is subject to high level of random mutations by the nucleotide analog ribavirin. Functionally, forms an icosahedral capsid of pseudo T=3 symmetry with capsid proteins VP2 and VP3. The capsid is 300 Angstroms in diameter, composed of 60 copies of each capsid protein and enclosing the viral positive strand RNA genome. Capsid protein VP1 mainly forms the vertices of the capsid. Capsid protein VP1 interacts with host cell receptor to provide virion attachment to target host cells. This attachment induces virion internalization. Tyrosine kinases are probably involved in the entry process. After binding to its receptor, the capsid undergoes conformational changes. Capsid protein VP1 N-terminus (that contains an amphipathic alpha-helix) and capsid protein VP4 are externalized. Together, they shape a pore in the host membrane through which viral genome is translocated to host cell cytoplasm. In terms of biological role, forms an icosahedral capsid of pseudo T=3 symmetry with capsid proteins VP2 and VP3. The capsid is 300 Angstroms in diameter, composed of 60 copies of each capsid protein and enclosing the viral positive strand RNA genome. Lies on the inner surface of the capsid shell. After binding to the host receptor, the capsid undergoes conformational changes. Capsid protein VP4 is released, Capsid protein VP1 N-terminus is externalized, and together, they shape a pore in the host membrane through which the viral genome is translocated into the host cell cytoplasm. Its function is as follows. Component of immature procapsids, which is cleaved into capsid proteins VP4 and VP2 after maturation. Allows the capsid to remain inactive before the maturation step. Functionally, cysteine protease that cleaves viral polyprotein and specific host proteins. It is responsible for the autocatalytic cleavage between the P1 and P2 regions, which is the first cleavage occurring in the polyprotein. Also cleaves the host translation initiation factor EIF4G1, in order to shut down the capped cellular mRNA translation. Inhibits the host nucleus-cytoplasm protein and RNA trafficking by cleaving host members of the nuclear pores. Counteracts stress granule formation probably by antagonizing its assembly or promoting its dissassembly. In terms of biological role, plays an essential role in the virus replication cycle by acting as a viroporin. Creates a pore in the host endoplasmic reticulum and as a consequence releases Ca2+ in the cytoplasm of infected cell. In turn, high levels of cytoplasmic calcium may trigger membrane trafficking and transport of viral ER-associated proteins to viroplasms, sites of viral genome replication. Induces and associates with structural rearrangements of intracellular membranes. Displays RNA-binding, nucleotide binding and NTPase activities. May play a role in virion morphogenesis and viral RNA encapsidation by interacting with the capsid protein VP3. Its function is as follows. Localizes the viral replication complex to the surface of membranous vesicles. Together with protein 3CD binds the Cis-Active RNA Element (CRE) which is involved in RNA synthesis initiation. Acts as a cofactor to stimulate the activity of 3D polymerase, maybe through a nucleid acid chaperone activity. Functionally, localizes the viral replication complex to the surface of membranous vesicles. It inhibits host cell endoplasmic reticulum-to-Golgi apparatus transport and causes the disassembly of the Golgi complex, possibly through GBF1 interaction. This would result in depletion of MHC, trail receptors and IFN receptors at the host cell surface. Plays an essential role in viral RNA replication by recruiting ACBD3 and PI4KB at the viral replication sites, thereby allowing the formation of the rearranged membranous structures where viral replication takes place. In terms of biological role, acts as a primer for viral RNA replication and remains covalently bound to viral genomic RNA. VPg is uridylylated prior to priming replication into VPg-pUpU. The oriI viral genomic sequence may act as a template for this. The VPg-pUpU is then used as primer on the genomic RNA poly(A) by the RNA-dependent RNA polymerase to replicate the viral genome. During genome replication, the VPg-RNA linkage is removed by the host TDP2, thereby accelerating replication. During the late stage of the replication cycle, host TDP2 is excluded from sites of viral RNA synthesis and encapsidation, allowing for the generation of progeny virions. Involved in the viral replication complex and viral polypeptide maturation. It exhibits protease activity with a specificity and catalytic efficiency that is different from protease 3C. Protein 3CD binds to the 5'UTR of the viral genome. Its function is as follows. Replicates the viral genomic RNA on the surface of intracellular membranes. May form linear arrays of subunits that propagate along a strong head-to-tail interaction called interface-I. Covalently attaches UMP to a tyrosine of VPg, which is used to prime RNA synthesis. The positive stranded RNA genome is first replicated at virus induced membranous vesicles, creating a dsRNA genomic replication form. This dsRNA is then used as template to synthesize positive stranded RNA genomes. ss(+)RNA genomes are either translated, replicated or encapsidated. Functionally, major viral protease that mediates proteolytic processing of the polyprotein. Cleaves host EIF5B, contributing to host translation shutoff. Also cleaves host PABPC1, contributing to host translation shutoff. Cleaves host NLRP1, triggers host N-glycine-mediated degradation of the autoinhibitory NLRP1 N-terminal fragment. This chain is Genome polyprotein, found in Echovirus 6 (strain Charles).